Consider the following 444-residue polypeptide: Na(+)/H(+) antiporter NhaA 2 (444 aa).

11 helical membrane passes run 21 to 41 (FSGI…NSPF), 64 to 84 (FSIH…MVGL), 102 to 122 (AFPV…YYVL), 131 to 151 (GFGI…LLLG), 160 to 180 (VFLV…IAVF), 185 to 205 (EGLH…LTGI), 212 to 232 (HLGV…HSGI), 307 to 327 (ALQP…NAGV), 342 to 362 (LGVI…LTFL), 377 to 397 (WSHI…SMFV), and 413 to 433 (IAIL…LIIN).

This sequence belongs to the NhaA Na(+)/H(+) (TC 2.A.33) antiporter family.

The protein resides in the cell inner membrane. It carries out the reaction Na(+)(in) + 2 H(+)(out) = Na(+)(out) + 2 H(+)(in). Na(+)/H(+) antiporter that extrudes sodium in exchange for external protons. The protein is Na(+)/H(+) antiporter NhaA 2 of Helicobacter hepaticus (strain ATCC 51449 / 3B1).